The chain runs to 303 residues: Probable 5-dehydro-4-deoxyglucarate dehydratase (303 aa).

The protein belongs to the DapA family.

The enzyme catalyses 5-dehydro-4-deoxy-D-glucarate + H(+) = 2,5-dioxopentanoate + CO2 + H2O. It functions in the pathway carbohydrate acid metabolism; D-glucarate degradation; 2,5-dioxopentanoate from D-glucarate: step 2/2. This chain is Probable 5-dehydro-4-deoxyglucarate dehydratase, found in Paracidovorax citrulli (strain AAC00-1) (Acidovorax citrulli).